Reading from the N-terminus, the 331-residue chain is Pantothenate kinase (331 aa).

109-116 is a binding site for ATP; the sequence is GSVAVGKS.

This sequence belongs to the prokaryotic pantothenate kinase family.

It is found in the cytoplasm. It carries out the reaction (R)-pantothenate + ATP = (R)-4'-phosphopantothenate + ADP + H(+). The protein operates within cofactor biosynthesis; coenzyme A biosynthesis; CoA from (R)-pantothenate: step 1/5. The sequence is that of Pantothenate kinase from Rhizobium leguminosarum bv. trifolii (strain WSM2304).